A 1172-amino-acid chain; its full sequence is Tudor domain-containing protein 1 (1172 aa).

Disordered regions lie at residues 1-59 (MMPR…KNNF) and 72-136 (QEDS…KKSH). Composition is skewed to low complexity over residues 75–86 (SSVVSSNPAVVN) and 103–117 (NPVS…SPPN). Residues 118–129 (QVKTKPSSNVTP) are compositionally biased toward polar residues. Residues Cys-163, Cys-166, Cys-174, Cys-177, Cys-183, Cys-187, His-195, and Cys-199 each contribute to the Zn(2+) site. Residues 163–199 (CHRCGLFGSLRCSQCKQTYYCSTACQRRDWSSHSTIC) form an MYND-type zinc finger. Tudor domains are found at residues 307-367 (LPVK…LDLF), 536-595 (YPTI…LLDL), 756-815 (KAEI…FLLL), and 982-1040 (RPRT…HLEL).

This sequence belongs to the TDRD1 family. In terms of assembly, found in a mRNP complex, at least composed of TDRD1, TDRD6, TDRD7 and DDX4. Interacts with MAEL. Interacts with PIWIL1, PIWIL2 and PIWIL4 (when methylated on arginine residues). Interacts with TDRD12. Testis and ovary specific. Present in germ-line cells and is most abundant in fetal prospermatogonia and postnatal primary spermatocytes (at protein level).

It is found in the cytoplasm. Plays a central role during spermatogenesis by participating in the repression transposable elements and preventing their mobilization, which is essential for the germline integrity. Acts via the piRNA metabolic process, which mediates the repression of transposable elements during meiosis by forming complexes composed of piRNAs and Piwi proteins and governs the methylation and subsequent repression of transposons. Required for the localization of Piwi proteins to the meiotic nuage. Involved in the piRNA metabolic process by ensuring the entry of correct transcripts into the normal piRNA pool and limiting the entry of cellular transcripts into the piRNA pathway. May act by allowing the recruitment of piRNA biogenesis or loading factors that ensure the correct entry of transcripts and piRNAs into Piwi proteins. This chain is Tudor domain-containing protein 1 (Tdrd1), found in Mus musculus (Mouse).